The following is a 325-amino-acid chain: Homeobox protein Hox-A1a (325 aa).

The short motif at 187–192 (TFDWMK) is the Antp-type hexapeptide element. Disordered regions lie at residues 194–215 (KRNP…PNTV) and 264–325 (RMKQ…YPSN). The segment at residues 212–271 (PNTVRTNFTTKQLTELEKEFHFNKYLTRARRVEIAAALQLNETQVKIWFQNRRMKQKKRE) is a DNA-binding region (homeobox). Over residues 285 to 300 (SGERNQEKVEDGESEK) the composition is skewed to basic and acidic residues. Low complexity predominate over residues 301–317 (SVSAPSTPSPTSSTVSS).

The protein belongs to the Antp homeobox family. Labial subfamily.

The protein resides in the nucleus. In terms of biological role, sequence-specific transcription factor which is part of a developmental regulatory system that provides cells with specific positional identities on the anterior-posterior axis. This chain is Homeobox protein Hox-A1a (hoxa1a), found in Takifugu rubripes (Japanese pufferfish).